Consider the following 321-residue polypeptide: UDP-N-acetyl-alpha-D-glucosaminuronate decarboxylase (321 aa).

Positions 12, 13, 14, 33, 34, 36, 38, 76, 95, 117, 148, and 152 each coordinate NAD(+). Tyr-148 functions as the Proton acceptor in the catalytic mechanism.

The protein belongs to the NAD(P)-dependent epimerase/dehydratase family. Homodimer. Requires NAD(+) as cofactor.

It carries out the reaction UDP-2-acetamido-2-deoxy-alpha-D-glucuronate + H(+) = UDP-N-acetyl-alpha-D-xylosamine + CO2. Its activity is regulated as follows. Activity is completely inhibited by NADH but not by NADPH. In terms of biological role, decarboxylase involved in the biosynthesis of the nucleotide-sugar UDP-N-acetylxylosamine (UDP-XylNAc). Catalyzes the NAD-dependent decarboxylation of UDP-N-acetylglucosaminuronic acid (UDP-GlcNAcA) to UDP-XylNAc. Cannot use other UDP-uronates, such as UDP-glucuronic acid (UDP-GlcA) and UDP-galacturonic acid (UDP-GalA). The chain is UDP-N-acetyl-alpha-D-glucosaminuronate decarboxylase from Bacillus cytotoxicus (strain DSM 22905 / CIP 110041 / 391-98 / NVH 391-98).